The primary structure comprises 364 residues: Aminomethyltransferase (364 aa).

It belongs to the GcvT family. In terms of assembly, the glycine cleavage system is composed of four proteins: P, T, L and H.

It catalyses the reaction N(6)-[(R)-S(8)-aminomethyldihydrolipoyl]-L-lysyl-[protein] + (6S)-5,6,7,8-tetrahydrofolate = N(6)-[(R)-dihydrolipoyl]-L-lysyl-[protein] + (6R)-5,10-methylene-5,6,7,8-tetrahydrofolate + NH4(+). The glycine cleavage system catalyzes the degradation of glycine. In Shewanella oneidensis (strain ATCC 700550 / JCM 31522 / CIP 106686 / LMG 19005 / NCIMB 14063 / MR-1), this protein is Aminomethyltransferase.